Consider the following 329-residue polypeptide: RNA-binding protein CP33, chloroplastic (329 aa).

A chloroplast-targeting transit peptide spans 1 to 69 (MSSAYCSSAV…NIRRHRFFCA (69 aa)). A compositionally biased stretch (acidic residues) spans 77-104 (ADDEIQASVEEEEEVEEEGDEGEEEVEE). 2 disordered regions span residues 77–117 (ADDE…EEGR) and 296–329 (SERE…NVSA). RRM domains are found at residues 116-194 (GRLY…FPEV) and 219-297 (HKVY…LASE).

The protein localises to the plastid. The protein resides in the chloroplast. Could be involved in splicing and/or processing of chloroplast RNAs. In Arabidopsis thaliana (Mouse-ear cress), this protein is RNA-binding protein CP33, chloroplastic.